A 457-amino-acid polypeptide reads, in one-letter code: COBRA-like protein 3 (457 aa).

The first 35 residues, M1–E35, serve as a signal peptide directing secretion. 9 N-linked (GlcNAc...) asparagine glycosylation sites follow: N45, N170, N178, N217, N242, N258, N326, N341, and N361. Residue N430 is the site of GPI-anchor amidated asparagine attachment. Residues A431–A457 constitute a propeptide, removed in mature form. Residues Q437 to A457 form a helical membrane-spanning segment.

Belongs to the COBRA family.

It is found in the cell membrane. Its function is as follows. Involved in determining the orientation of cell expansion, probably by playing an important role in cellulose deposition. May act by recruiting cellulose synthesizing complexes to discrete positions on the cell surface. The polypeptide is COBRA-like protein 3 (BC1L4) (Oryza sativa subsp. japonica (Rice)).